We begin with the raw amino-acid sequence, 205 residues long: Ribosomal RNA small subunit methyltransferase G (205 aa).

Residues Gly70, Leu75, Ile121 to Glu122, and Arg136 contribute to the S-adenosyl-L-methionine site.

Belongs to the methyltransferase superfamily. RNA methyltransferase RsmG family.

The protein localises to the cytoplasm. The catalysed reaction is guanosine(527) in 16S rRNA + S-adenosyl-L-methionine = N(7)-methylguanosine(527) in 16S rRNA + S-adenosyl-L-homocysteine. Its function is as follows. Specifically methylates the N7 position of guanine in position 527 of 16S rRNA. The polypeptide is Ribosomal RNA small subunit methyltransferase G (Methylococcus capsulatus (strain ATCC 33009 / NCIMB 11132 / Bath)).